The chain runs to 294 residues: 4-hydroxy-tetrahydrodipicolinate synthase (294 aa).

Pyruvate is bound at residue Thr47. Residue Tyr135 is the Proton donor/acceptor of the active site. The active-site Schiff-base intermediate with substrate is the Lys163. Pyruvate is bound at residue Thr205.

Belongs to the DapA family. As to quaternary structure, homotetramer; dimer of dimers.

It is found in the cytoplasm. The enzyme catalyses L-aspartate 4-semialdehyde + pyruvate = (2S,4S)-4-hydroxy-2,3,4,5-tetrahydrodipicolinate + H2O + H(+). Its pathway is amino-acid biosynthesis; L-lysine biosynthesis via DAP pathway; (S)-tetrahydrodipicolinate from L-aspartate: step 3/4. Catalyzes the condensation of (S)-aspartate-beta-semialdehyde [(S)-ASA] and pyruvate to 4-hydroxy-tetrahydrodipicolinate (HTPA). This chain is 4-hydroxy-tetrahydrodipicolinate synthase, found in Rickettsia montanensis.